We begin with the raw amino-acid sequence, 879 residues long: Metabotropic glutamate receptor 3 (879 aa).

The first 24 residues, 1–24, serve as a signal peptide directing secretion; the sequence is MKMLTRLQVLTLALFSKGFLLSLG. Over 25-577 the chain is Extracellular; the sequence is DHNFLRREIK…DYIRWEDAWA (553 aa). A disulfide bond links Cys-57 and Cys-99. L-glutamate is bound by residues Ser-151 and 172–174; that span reads AST. Asn-209 carries N-linked (GlcNAc...) asparagine glycosylation. Residue Tyr-222 coordinates L-glutamate. Cystine bridges form between Cys-240/Cys-527, Cys-361/Cys-373, Cys-412/Cys-419, Cys-509/Cys-528, Cys-513/Cys-531, Cys-534/Cys-546, and Cys-549/Cys-562. Residue Asn-292 is glycosylated (N-linked (GlcNAc...) asparagine). Asp-301 is a binding site for L-glutamate. Lys-389 contacts L-glutamate. Asn-414 and Asn-439 each carry an N-linked (GlcNAc...) asparagine glycan. Residues 578–598 traverse the membrane as a helical segment; it reads IGPVTIACLGFMCTCMVITVF. Topologically, residues 599–613 are cytoplasmic; it reads IKHNNTPLVKASGRE. The helical transmembrane segment at 614-634 threads the bilayer; the sequence is LCYILLFGVGLSYCMTFFFIA. Residues 635–688 lie on the Extracellular side of the membrane; the sequence is KPSPVICALRRLGLGSSFAICYSALLTKTNCIARIFDGVKNGAQRPKFISPSSQ. Residues 689 to 709 form a helical membrane-spanning segment; the sequence is VFICLGLILVQIVMVSVWLIL. The Cytoplasmic segment spans residues 710 to 735; the sequence is EAPGTRRYTLAEKRETVILKCNVKDS. Residues 736–756 traverse the membrane as a helical segment; it reads SMLISLTYDVILVILCTVYAF. Residues 757–769 lie on the Extracellular side of the membrane; that stretch reads KTRKCPENFNEAK. The helical transmembrane segment at 770 to 790 threads the bilayer; it reads FIGFTMYTTCIIWLAFLPIFY. At 791 to 807 the chain is on the cytoplasmic side; that stretch reads VTSSDYRVQTTTMCISV. Residues 808–828 form a helical membrane-spanning segment; it reads SLSGFVVLGCLFAPKVHIILF. Topologically, residues 829–879 are extracellular; it reads QPQKNVVTHRLHLNRFSVSGTGTTYSQSSASMYVPTVCNGREVLDSTTSSL.

The protein belongs to the G-protein coupled receptor 3 family. As to quaternary structure, interacts with TAMALIN.

It is found in the cell membrane. G-protein coupled receptor for glutamate. Ligand binding causes a conformation change that triggers signaling via guanine nucleotide-binding proteins (G proteins) and modulates the activity of down-stream effectors. Signaling inhibits adenylate cyclase activity. This chain is Metabotropic glutamate receptor 3 (GRM3), found in Macaca fascicularis (Crab-eating macaque).